Reading from the N-terminus, the 270-residue chain is UPF0354 protein BA_4944/GBAA_4944/BAS4588 (270 aa).

It belongs to the UPF0354 family.

This is UPF0354 protein BA_4944/GBAA_4944/BAS4588 from Bacillus anthracis.